The following is a 159-amino-acid chain: SsrA-binding protein (159 aa).

The disordered stretch occupies residues 137–159 (DKRETEKQRDWSREKGRLLKERG).

The protein belongs to the SmpB family.

It localises to the cytoplasm. Functionally, required for rescue of stalled ribosomes mediated by trans-translation. Binds to transfer-messenger RNA (tmRNA), required for stable association of tmRNA with ribosomes. tmRNA and SmpB together mimic tRNA shape, replacing the anticodon stem-loop with SmpB. tmRNA is encoded by the ssrA gene; the 2 termini fold to resemble tRNA(Ala) and it encodes a 'tag peptide', a short internal open reading frame. During trans-translation Ala-aminoacylated tmRNA acts like a tRNA, entering the A-site of stalled ribosomes, displacing the stalled mRNA. The ribosome then switches to translate the ORF on the tmRNA; the nascent peptide is terminated with the 'tag peptide' encoded by the tmRNA and targeted for degradation. The ribosome is freed to recommence translation, which seems to be the essential function of trans-translation. This is SsrA-binding protein from Mesorhizobium japonicum (strain LMG 29417 / CECT 9101 / MAFF 303099) (Mesorhizobium loti (strain MAFF 303099)).